Consider the following 21-residue polypeptide: Neuropeptide gamma (21 aa).

The tract at residues 1-21 (SSANPQITRKRHKINSFVGLM) is disordered. Methionine amide is present on methionine 21.

This sequence belongs to the tachykinin family.

The protein localises to the secreted. Tachykinins are active peptides which excite neurons, evoke behavioral responses, and contract (directly or indirectly) many smooth muscles. Is a potent vasoconstrictor and secretagogue that plays a regulatory role in the central control of ventilation, in particular, the heart rate variability (HRV). The sequence is that of Neuropeptide gamma from Oncorhynchus mykiss (Rainbow trout).